The sequence spans 345 residues: uncharacterized protein (345 aa).

PDZ GRASP-type domains lie at 27–112 (CGFR…WASI) and 118–207 (AIWH…HGVL). Residues 27–223 (CGFRVLKVEN…LSGPPPQPGD (197 aa)) are GRASP. The disordered stretch occupies residues 229-345 (PMLGGPDHKV…APQNEELVKN (117 aa)). Over residues 297–308 (KLSRELDHKTKD) the composition is skewed to basic and acidic residues. 2 stretches are compositionally biased toward polar residues: residues 309–318 (ASSTNDSQTT) and 328–338 (VNSTNDESAPQ).

The protein resides in the golgi apparatus membrane. This is an uncharacterized protein from Schizosaccharomyces pombe (strain 972 / ATCC 24843) (Fission yeast).